The chain runs to 260 residues: NAD kinase (260 aa).

D54 functions as the Proton acceptor in the catalytic mechanism. NAD(+) is bound by residues D54–G55, N123–D124, R150, D152, and T163–S168.

It belongs to the NAD kinase family. It depends on a divalent metal cation as a cofactor.

The protein localises to the cytoplasm. The catalysed reaction is NAD(+) + ATP = ADP + NADP(+) + H(+). Functionally, involved in the regulation of the intracellular balance of NAD and NADP, and is a key enzyme in the biosynthesis of NADP. Catalyzes specifically the phosphorylation on 2'-hydroxyl of the adenosine moiety of NAD to yield NADP. In Caldicellulosiruptor saccharolyticus (strain ATCC 43494 / DSM 8903 / Tp8T 6331), this protein is NAD kinase.